The chain runs to 185 residues: Ribosome-recycling factor (185 aa).

It belongs to the RRF family.

It localises to the cytoplasm. Responsible for the release of ribosomes from messenger RNA at the termination of protein biosynthesis. May increase the efficiency of translation by recycling ribosomes from one round of translation to another. The sequence is that of Ribosome-recycling factor from Laribacter hongkongensis (strain HLHK9).